A 101-amino-acid polypeptide reads, in one-letter code: Replication restart protein PriB (101 aa).

The 101-residue stretch at 1-101 (MATNHLVLSG…LHAENVELKT (101 aa)) folds into the SSB domain.

It belongs to the PriB family. In terms of assembly, homodimer. Interacts with PriA and DnaT. Component of the replication restart primosome. Primosome assembly occurs via a 'hand-off' mechanism. PriA binds to replication forks, subsequently PriB then DnaT bind; DnaT then displaces ssDNA to generate the helicase loading substrate.

Functionally, involved in the restart of stalled replication forks, which reloads the replicative helicase on sites other than the origin of replication; the PriA-PriB pathway is the major replication restart pathway. During primosome assembly it facilitates complex formation between PriA and DnaT on DNA; stabilizes PriA on DNA. Stimulates the DNA unwinding activity of PriA helicase. In Shewanella woodyi (strain ATCC 51908 / MS32), this protein is Replication restart protein PriB.